We begin with the raw amino-acid sequence, 491 residues long: Serine/threonine-protein phosphatase 2A regulatory subunit B'' subunit delta (491 aa).

The EF-hand domain occupies threonine 331–arginine 366. The Ca(2+) site is built by aspartate 344, aspartate 346, aspartate 348, and glutamate 355. 2 stretches are compositionally biased toward acidic residues: residues alanine 460 to aspartate 473 and alanine 481 to leucine 491. A disordered region spans residues alanine 460 to leucine 491.

PP2A consists of a common heterodimeric core enzyme, composed of a 36 kDa catalytic subunit (subunit C) and a 65 kDa constant regulatory subunit (PR65 or subunit A), that associates with a variety of regulatory subunits. Proteins that associate with the core dimer include three families of regulatory subunits B (the R2/B/PR55/B55, R3/B''/PR72/PR130/PR59 and R5/B'/B56 families), the 48 kDa variable regulatory subunit, viral proteins, and cell signaling molecules. In terms of tissue distribution, expressed in testis, kidney, liver, lung, spleen, brain and heart.

The B regulatory subunit might modulate substrate selectivity and catalytic activity, and might also direct the localization of the catalytic enzyme to a particular subcellular compartment. Interacts with retinoblastoma-related protein p107 (in vivo). May target PP2A core dimer to p107 resulting in dephosphorylation of p107. This Mus musculus (Mouse) protein is Serine/threonine-protein phosphatase 2A regulatory subunit B'' subunit delta (Ppp2r3d).